The primary structure comprises 151 residues: Protein ripply1 (151 aa).

The short motif at 57 to 60 (WRPW) is the WRPW motif element. Positions 96–131 (HPVRLFWPKSRSFDYLYSAGEILLQNFPVQATINLY) are ripply homology domain. Residues 130 to 151 (LYEDSDSEEEEEDEEQEDEEEK) form a disordered region. The segment covering 132 to 151 (EDSDSEEEEEDEEQEDEEEK) has biased composition (acidic residues).

It belongs to the ripply family.

Its subcellular location is the nucleus. In terms of biological role, plays a role in somitogenesis. Essential for transcriptional repression of the segmental patterning genes, thus terminating the segmentation program in the presomitic mesoderm, and also required for the maintenance of rostrocaudal polarity in somites. The protein is Protein ripply1 of Homo sapiens (Human).